The sequence spans 556 residues: Hydroxylamine reductase (556 aa).

Positions 5, 8, 17, and 23 each coordinate [4Fe-4S] cluster. Hybrid [4Fe-2O-2S] cluster-binding residues include H249, E273, C317, C409, C437, C462, E497, and K499. C409 carries the post-translational modification Cysteine persulfide.

This sequence belongs to the HCP family. Requires [4Fe-4S] cluster as cofactor. It depends on hybrid [4Fe-2O-2S] cluster as a cofactor.

It localises to the cytoplasm. It catalyses the reaction A + NH4(+) + H2O = hydroxylamine + AH2 + H(+). Functionally, catalyzes the reduction of hydroxylamine to form NH(3) and H(2)O. The polypeptide is Hydroxylamine reductase (Kosmotoga olearia (strain ATCC BAA-1733 / DSM 21960 / TBF 19.5.1)).